Consider the following 57-residue polypeptide: Andropin (57 aa).

The first 23 residues, Met-1 to Ala-23, serve as a signal peptide directing secretion.

It belongs to the andropin family. As to expression, ejaculatory duct of adult males.

It localises to the secreted. Functionally, male-specific peptide with moderate activity against Gram-positive bacteria. In Drosophila melanogaster (Fruit fly), this protein is Andropin (Anp).